The primary structure comprises 180 residues: Prorelaxin (180 aa).

Residues 1–25 (MLRLFLSHLLGVWLLLSLRARKIPA) form the signal peptide. 3 disulfides stabilise this stretch: C33–C167, C45–C180, and C166–C171. A propeptide spans 53–154 (SSQQHREPRQ…RSRLDAHSRI (102 aa)) (connecting peptide).

This sequence belongs to the insulin family. In terms of assembly, heterodimer of a B chain and an A chain linked by two disulfide bonds. As to expression, expressed by the placenta. Exclusively detected in cells located in the lamellar placental labyrinth and absent from other placental and non-placental uterine parts.

It localises to the secreted. Relaxin is an ovarian hormone that acts with estrogen to produce dilatation of the birth canal in many mammals. The protein is Prorelaxin (RLN) of Felis catus (Cat).